Reading from the N-terminus, the 360-residue chain is Phenylalanine--tRNA ligase alpha subunit (360 aa).

Glu260 serves as a coordination point for Mg(2+).

It belongs to the class-II aminoacyl-tRNA synthetase family. Phe-tRNA synthetase alpha subunit type 1 subfamily. Tetramer of two alpha and two beta subunits. Mg(2+) serves as cofactor.

It is found in the cytoplasm. It catalyses the reaction tRNA(Phe) + L-phenylalanine + ATP = L-phenylalanyl-tRNA(Phe) + AMP + diphosphate + H(+). This Beijerinckia indica subsp. indica (strain ATCC 9039 / DSM 1715 / NCIMB 8712) protein is Phenylalanine--tRNA ligase alpha subunit.